The following is a 300-amino-acid chain: Ribosomal protein L11 methyltransferase (300 aa).

S-adenosyl-L-methionine is bound by residues Thr-152, Gly-173, Asp-195, and Asn-234.

Belongs to the methyltransferase superfamily. PrmA family.

The protein localises to the cytoplasm. The catalysed reaction is L-lysyl-[protein] + 3 S-adenosyl-L-methionine = N(6),N(6),N(6)-trimethyl-L-lysyl-[protein] + 3 S-adenosyl-L-homocysteine + 3 H(+). Functionally, methylates ribosomal protein L11. This is Ribosomal protein L11 methyltransferase from Burkholderia mallei (strain NCTC 10247).